Reading from the N-terminus, the 234-residue chain is Adenosine 5'-phosphosulfate reductase (234 aa).

Positions 120, 121, 203, and 206 each coordinate [4Fe-4S] cluster. Cys-229 serves as the catalytic Nucleophile; cysteine thiosulfonate intermediate.

The protein belongs to the PAPS reductase family. CysH subfamily. [4Fe-4S] cluster is required as a cofactor.

It is found in the cytoplasm. The catalysed reaction is [thioredoxin]-disulfide + sulfite + AMP + 2 H(+) = adenosine 5'-phosphosulfate + [thioredoxin]-dithiol. The protein operates within sulfur metabolism; hydrogen sulfide biosynthesis; sulfite from sulfate. Functionally, catalyzes the formation of sulfite from adenosine 5'-phosphosulfate (APS) using thioredoxin as an electron donor. This is Adenosine 5'-phosphosulfate reductase from Bacillus mycoides (strain KBAB4) (Bacillus weihenstephanensis).